A 456-amino-acid chain; its full sequence is Bifunctional protein GlmU (456 aa).

Residues 1-229 form a pyrophosphorylase region; it reads MLNSAMSVVI…LSEVEGVNNR (229 aa). UDP-N-acetyl-alpha-D-glucosamine is bound by residues 11-14, K25, Q76, 81-82, 103-105, G140, E154, N169, and N227; these read LAAG, GT, and YGD. D105 serves as a coordination point for Mg(2+). N227 provides a ligand contact to Mg(2+). Positions 230-250 are linker; it reads LQLSALERIYQREQADKLLLA. Residues 251–456 form an N-acetyltransferase region; the sequence is GVMLLDPARF…SGWQRPVKKK (206 aa). Residues R333 and K351 each contribute to the UDP-N-acetyl-alpha-D-glucosamine site. The active-site Proton acceptor is the H363. Y366 and N377 together coordinate UDP-N-acetyl-alpha-D-glucosamine. Residues A380, 386–387, S405, A423, and R440 contribute to the acetyl-CoA site; that span reads NY.

This sequence in the N-terminal section; belongs to the N-acetylglucosamine-1-phosphate uridyltransferase family. It in the C-terminal section; belongs to the transferase hexapeptide repeat family. Homotrimer. It depends on Mg(2+) as a cofactor.

The protein resides in the cytoplasm. It catalyses the reaction alpha-D-glucosamine 1-phosphate + acetyl-CoA = N-acetyl-alpha-D-glucosamine 1-phosphate + CoA + H(+). It carries out the reaction N-acetyl-alpha-D-glucosamine 1-phosphate + UTP + H(+) = UDP-N-acetyl-alpha-D-glucosamine + diphosphate. The protein operates within nucleotide-sugar biosynthesis; UDP-N-acetyl-alpha-D-glucosamine biosynthesis; N-acetyl-alpha-D-glucosamine 1-phosphate from alpha-D-glucosamine 6-phosphate (route II): step 2/2. Its pathway is nucleotide-sugar biosynthesis; UDP-N-acetyl-alpha-D-glucosamine biosynthesis; UDP-N-acetyl-alpha-D-glucosamine from N-acetyl-alpha-D-glucosamine 1-phosphate: step 1/1. It participates in bacterial outer membrane biogenesis; LPS lipid A biosynthesis. In terms of biological role, catalyzes the last two sequential reactions in the de novo biosynthetic pathway for UDP-N-acetylglucosamine (UDP-GlcNAc). The C-terminal domain catalyzes the transfer of acetyl group from acetyl coenzyme A to glucosamine-1-phosphate (GlcN-1-P) to produce N-acetylglucosamine-1-phosphate (GlcNAc-1-P), which is converted into UDP-GlcNAc by the transfer of uridine 5-monophosphate (from uridine 5-triphosphate), a reaction catalyzed by the N-terminal domain. The polypeptide is Bifunctional protein GlmU (Pectobacterium atrosepticum (strain SCRI 1043 / ATCC BAA-672) (Erwinia carotovora subsp. atroseptica)).